Consider the following 113-residue polypeptide: Iron-sulfur cluster insertion protein ErpA (113 aa).

Iron-sulfur cluster-binding residues include Cys-41, Cys-105, and Cys-107.

This sequence belongs to the HesB/IscA family. As to quaternary structure, homodimer. It depends on iron-sulfur cluster as a cofactor.

In terms of biological role, required for insertion of 4Fe-4S clusters for at least IspG. This chain is Iron-sulfur cluster insertion protein ErpA, found in Histophilus somni (strain 129Pt) (Haemophilus somnus).